The primary structure comprises 78 residues: uncharacterized protein (78 aa).

This is an uncharacterized protein from Bacillus subtilis (strain 168).